The sequence spans 238 residues: DnaA regulatory inactivator Hda (238 aa).

The protein belongs to the DnaA family. HdA subfamily. In terms of assembly, the active form seems to be an ADP-bound monomer. Forms the RIDA complex (regulatory inactivation of DnaA) of ATP-DnaA, ADP-Hda and the DNA-loaded beta sliding clamp (dnaN).

Functionally, mediates the interaction of DNA replication initiator protein DnaA with DNA polymerase subunit beta sliding clamp (dnaN). Stimulates hydrolysis of ATP-DnaA to ADP-DnaA, rendering DnaA inactive for reinitiation, a process called regulatory inhibition of DnaA or RIDA. This is DnaA regulatory inactivator Hda from Pectobacterium atrosepticum (strain SCRI 1043 / ATCC BAA-672) (Erwinia carotovora subsp. atroseptica).